Here is a 505-residue protein sequence, read N- to C-terminus: Bifunctional pantoate ligase/cytidylate kinase (505 aa).

The pantoate--beta-alanine ligase stretch occupies residues methionine 1–threonine 268. Methionine 18–histidine 25 contributes to the ATP binding site. Residue histidine 25 is the Proton donor of the active site. Glutamine 53 is a binding site for (R)-pantoate. A beta-alanine-binding site is contributed by glutamine 53. Glycine 142–aspartate 145 serves as a coordination point for ATP. A (R)-pantoate-binding site is contributed by glutamine 148. Residues valine 171 and cysteine 179 to arginine 182 each bind ATP. The interval phenylalanine 269 to arginine 505 is cytidylate kinase.

This sequence in the N-terminal section; belongs to the pantothenate synthetase family. It in the C-terminal section; belongs to the cytidylate kinase family. Type 1 subfamily.

Its subcellular location is the cytoplasm. It catalyses the reaction (R)-pantoate + beta-alanine + ATP = (R)-pantothenate + AMP + diphosphate + H(+). The enzyme catalyses CMP + ATP = CDP + ADP. The catalysed reaction is dCMP + ATP = dCDP + ADP. Its pathway is cofactor biosynthesis; (R)-pantothenate biosynthesis; (R)-pantothenate from (R)-pantoate and beta-alanine: step 1/1. Functionally, catalyzes the condensation of pantoate with beta-alanine in an ATP-dependent reaction via a pantoyl-adenylate intermediate. In terms of biological role, catalyzes the transfer of a phosphate group from ATP to either CMP or dCMP to form CDP or dCDP and ADP, respectively. The chain is Bifunctional pantoate ligase/cytidylate kinase from Prochlorococcus marinus (strain MIT 9313).